The following is a 327-amino-acid chain: uncharacterized protein (327 aa).

Residues 129-306 (TPLQNQEATT…DNKKTVTTSS (178 aa)) are disordered. A compositionally biased stretch (polar residues) spans 130-144 (PLQNQEATTSPTIES). Composition is skewed to basic and acidic residues over residues 184 to 196 (KSVE…DRNV) and 233 to 276 (TKDE…EKIV).

This is an uncharacterized protein from Caenorhabditis elegans.